The chain runs to 94 residues: Copper resistance protein K (94 aa).

An N-terminal signal peptide occupies residues 1-20; that stretch reads MKQKLMVGAFIAAVSLSAAA.

In terms of assembly, monomer in the copper-bound form. Homodimer as apoprotein. Dissociates into monomers upon copper binding.

Its subcellular location is the periplasm. Its function is as follows. Involved in resistance to copper. Can bind up to 2 copper ions. Has higher affinity for Cu(+) than for Cu(2+). This is Copper resistance protein K (copK) from Cupriavidus metallidurans (strain ATCC 43123 / DSM 2839 / NBRC 102507 / CH34) (Ralstonia metallidurans).